Reading from the N-terminus, the 858-residue chain is Volume-regulated anion channel subunit LRRC8D (858 aa).

Over 1–22 the chain is Cytoplasmic; it reads MFTLAEVASLNDIQPTYRILKP. Residues 23–48 form a helical membrane-spanning segment; the sequence is WWDVFMDYLAVVMLMVAIFAGTMQLT. Over 49–163 the chain is Extracellular; it reads KDQVVCLPVL…YHLALPWYSK (115 aa). C54 and C354 form a disulfide bridge. Residues 164-182 form a helical membrane-spanning segment; the sequence is YFPYLALIHTIILMVSSNF. Residues 183–308 are Cytoplasmic-facing; it reads WFKYPKTCSK…EDSDLIYKLY (126 aa). Positions 221 to 251 are disordered; sequence SEENKQRITGAQTLPKHVSTSSDEGSPSAST. Positions 227 to 251 are enriched in polar residues; sequence RITGAQTLPKHVSTSSDEGSPSAST. Residues S241, S242, and S246 each carry the phosphoserine modification. A helical transmembrane segment spans residues 309–328; the sequence is VVQTVIKTAKFIFILCYTAN. Over 329–360 the chain is Extracellular; sequence FVNAISFEHVCKPKVEHLIGYEVFECTHNMAY. The chain crosses the membrane as a helical span at residues 361-386; that stretch reads MLKKLLISYISIICVYGFICLYTLFW. At 387-858 the chain is on the cytoplasmic side; that stretch reads LFRIPLKEYS…DINIPFANGI (472 aa). 13 LRR repeats span residues 514 to 534, 538 to 559, 561 to 582, 589 to 609, 612 to 632, 636 to 657, 659 to 680, 684 to 705, 707 to 728, 730 to 751, 753 to 774, 776 to 797, and 799 to 820; these read NLQE…AFSF, HLRC…VYLL, NLRE…IGLE, HLKI…ITDV, HLTK…NSLK, NVAE…IFSL, NLQE…ISFQ, RLTC…ITHV, NLES…VFSL, KLRC…IGLL, NLQH…LFKC, KLRT…VGQL, and QLTQ…LGQC.

Belongs to the LRRC8 family. Heterohexamer; oligomerizes with other LRRC8 proteins (LRRC8A, LRRC8B, LRRC8C and/or LRRC8E) to form a heterohexamer. In vivo, the subunit composition may depend primarily on expression levels, and heterooligomeric channels containing various proportions of the different LRRC8 proteins may coexist.

It is found in the cell membrane. It localises to the endoplasmic reticulum membrane. It carries out the reaction chloride(in) = chloride(out). The catalysed reaction is iodide(out) = iodide(in). The enzyme catalyses taurine(out) = taurine(in). Non-essential component of the volume-regulated anion channel (VRAC, also named VSOAC channel), an anion channel required to maintain a constant cell volume in response to extracellular or intracellular osmotic changes. The VRAC channel conducts iodide better than chloride and can also conduct organic osmolytes like taurine. Plays a redundant role in the efflux of amino acids, such as aspartate, in response to osmotic stress. LRRC8A and LRRC8D are required for the uptake of the drug cisplatin. Channel activity requires LRRC8A plus at least one other family member (LRRC8B, LRRC8C, LRRC8D or LRRC8E); channel characteristics depend on the precise subunit composition. Also acts as a regulator of glucose-sensing in pancreatic beta cells: VRAC currents, generated in response to hypotonicity- or glucose-induced beta cell swelling, depolarize cells, thereby causing electrical excitation, leading to increase glucose sensitivity and insulin secretion. VRAC channels containing LRRC8D inhibit transport of immunoreactive cyclic dinucleotide GMP-AMP (2'-3'-cGAMP), an immune messenger produced in response to DNA virus in the cytosol. Mediates the import of the antibiotic blasticidin-S into the cell. This is Volume-regulated anion channel subunit LRRC8D from Homo sapiens (Human).